The chain runs to 185 residues: Urease accessory protein UreE (185 aa).

The segment at 153-185 (LRANSAQGHGHSHSHSHDHHGYHHHGDGHWHKH) is disordered. A compositionally biased stretch (basic residues) spans 162–175 (GHSHSHSHDHHGYH). Positions 176 to 185 (HHGDGHWHKH) are enriched in basic and acidic residues.

The protein belongs to the UreE family.

Its subcellular location is the cytoplasm. Its function is as follows. Involved in urease metallocenter assembly. Binds nickel. Probably functions as a nickel donor during metallocenter assembly. The sequence is that of Urease accessory protein UreE from Haemophilus influenzae (strain 86-028NP).